The primary structure comprises 336 residues: tRNA N6-adenosine threonylcarbamoyltransferase (336 aa).

Residues histidine 111 and histidine 115 each contribute to the Fe cation site. Substrate is bound by residues 134 to 138, aspartate 167, glycine 180, and asparagine 271; that span reads LVSGG. Aspartate 299 provides a ligand contact to Fe cation.

This sequence belongs to the KAE1 / TsaD family. Fe(2+) serves as cofactor.

The protein resides in the cytoplasm. It carries out the reaction L-threonylcarbamoyladenylate + adenosine(37) in tRNA = N(6)-L-threonylcarbamoyladenosine(37) in tRNA + AMP + H(+). In terms of biological role, required for the formation of a threonylcarbamoyl group on adenosine at position 37 (t(6)A37) in tRNAs that read codons beginning with adenine. Is involved in the transfer of the threonylcarbamoyl moiety of threonylcarbamoyl-AMP (TC-AMP) to the N6 group of A37, together with TsaE and TsaB. TsaD likely plays a direct catalytic role in this reaction. This is tRNA N6-adenosine threonylcarbamoyltransferase from Thioalkalivibrio sulfidiphilus (strain HL-EbGR7).